We begin with the raw amino-acid sequence, 509 residues long: Dye-decolorizing peroxidase AauDyP1 (509 aa).

The N-terminal stretch at 1–22 (MRLSPVFVALLSGLLAADLGLA) is a signal peptide. Residues 23–61 (RSVAPRVADSPAAVTGTRKTSLLKNVAGLPPVPSAAQVA) constitute a propeptide that is removed on maturation. Aspartate 229 functions as the Proton acceptor in the catalytic mechanism. An N-linked (GlcNAc...) asparagine glycan is attached at asparagine 343. Histidine 365 is a heme binding site. N-linked (GlcNAc...) asparagine glycans are attached at residues asparagine 383, asparagine 410, and asparagine 476.

This sequence belongs to the DyP-type peroxidase family. Heme b serves as cofactor.

It is found in the secreted. The enzyme catalyses Reactive Blue 5 + 2 H2O2 = 2,2'-disulfonyl azobenzene + 3-[(4-amino-6-chloro-1,3,5-triazin-2-yl)amino]benzenesulfonate + phthalate + 2 H2O + 2 H(+). The catalysed reaction is 2 a phenolic donor + H2O2 = 2 a phenolic radical donor + 2 H2O. With respect to regulation, inhibited by imidazole. Functionally, manganese-independent peroxidase that is able to convert a large number of compounds, but its physiological substrate is not known. In addition to classic peroxidase substrates (e.g. 2,6-dimethoxyphenol), oxidizes dyes such as Reactive Blue 5 and Reactive Black 5. This is Dye-decolorizing peroxidase AauDyP1 from Auricularia auricula-judae (Judas ear fungus).